We begin with the raw amino-acid sequence, 407 residues long: Argininosuccinate synthase (407 aa).

Residues alanine 10–serine 18 and alanine 37 each bind ATP. Residues tyrosine 90 and serine 95 each coordinate L-citrulline. Glycine 120 is a binding site for ATP. Residues threonine 122, asparagine 126, and aspartate 127 each contribute to the L-aspartate site. Asparagine 126 serves as a coordination point for L-citrulline. Arginine 130, serine 181, serine 190, glutamate 266, and tyrosine 278 together coordinate L-citrulline.

The protein belongs to the argininosuccinate synthase family. Type 1 subfamily. In terms of assembly, homotetramer.

It is found in the cytoplasm. The catalysed reaction is L-citrulline + L-aspartate + ATP = 2-(N(omega)-L-arginino)succinate + AMP + diphosphate + H(+). The protein operates within amino-acid biosynthesis; L-arginine biosynthesis; L-arginine from L-ornithine and carbamoyl phosphate: step 2/3. The chain is Argininosuccinate synthase from Ruegeria sp. (strain TM1040) (Silicibacter sp.).